Consider the following 697-residue polypeptide: Hormonally up-regulated neu tumor-associated kinase homolog (697 aa).

In terms of domain architecture, Protein kinase spans 55 to 313 (YLIGRKLGEG…IQQALANRWL (259 aa)). ATP is bound by residues 61–69 (LGEGSFAKV) and K84. D179 serves as the catalytic Proton acceptor. Basic and acidic residues-rich tracts occupy residues 405-424 (KMNK…KRGE) and 460-473 (PVKE…ERES). Disordered regions lie at residues 405–480 (KMNK…LSPF) and 586–642 (DNTS…NCVR). Positions 586 to 600 (DNTSPIKGHSNQASF) are enriched in polar residues. The span at 607-626 (SPSSPESMSPTSPHSPHSPS) shows a compositional bias: low complexity. Positions 627–637 (CNNNISGNLGS) are enriched in polar residues.

It belongs to the protein kinase superfamily. CAMK Ser/Thr protein kinase family. SNF1 subfamily.

The enzyme catalyses L-seryl-[protein] + ATP = O-phospho-L-seryl-[protein] + ADP + H(+). The catalysed reaction is L-threonyl-[protein] + ATP = O-phospho-L-threonyl-[protein] + ADP + H(+). This is Hormonally up-regulated neu tumor-associated kinase homolog (hunk) from Xenopus tropicalis (Western clawed frog).